A 125-amino-acid polypeptide reads, in one-letter code: Desulfoferrodoxin homolog (125 aa).

C10, C13, C29, C30, H49, H69, H75, C116, and H119 together coordinate Fe cation.

The protein belongs to the desulfoferrodoxin family. Requires Fe(3+) as cofactor. It depends on Cu(2+) as a cofactor.

This chain is Desulfoferrodoxin homolog, found in Archaeoglobus fulgidus (strain ATCC 49558 / DSM 4304 / JCM 9628 / NBRC 100126 / VC-16).